The following is a 223-amino-acid chain: Uridylate kinase (223 aa).

Position 9 to 10 (9 to 10 (GS)) interacts with ATP. Glycine 43 lines the UMP pocket. The ATP site is built by glycine 44 and arginine 48. Residues aspartate 65 and 112-118 (THPGHTT) each bind UMP. Threonine 137, asparagine 138, tyrosine 143, and aspartate 146 together coordinate ATP.

This sequence belongs to the UMP kinase family. As to quaternary structure, homohexamer.

The protein localises to the cytoplasm. The catalysed reaction is UMP + ATP = UDP + ADP. Its pathway is pyrimidine metabolism; CTP biosynthesis via de novo pathway; UDP from UMP (UMPK route): step 1/1. With respect to regulation, inhibited by UTP. Functionally, catalyzes the reversible phosphorylation of UMP to UDP. This Methanopyrus kandleri (strain AV19 / DSM 6324 / JCM 9639 / NBRC 100938) protein is Uridylate kinase.